A 239-amino-acid chain; its full sequence is ATP synthase subunit b (239 aa).

Residues 1–22 show a composition bias toward low complexity; that stretch reads MYAQEAQQKPEAQQSAPAAEQP. The disordered stretch occupies residues 1–64; the sequence is MYAQEAQQKP…GEEEAGEHME (64 aa). 2 stretches are compositionally biased toward basic and acidic residues: residues 23–33 and 45–64; these read KPAEEQAKPEQ and ELSEASHAAEGEEEAGEHME. Residues 85 to 105 traverse the membrane as a helical segment; that stretch reads SYWIAMAFNFAIVFALLGWAM.

It belongs to the ATPase B chain family. As to quaternary structure, F-type ATPases have 2 components, F(1) - the catalytic core - and F(0) - the membrane proton channel. F(1) has five subunits: alpha(3), beta(3), gamma(1), delta(1), epsilon(1). F(0) has three main subunits: a(1), b(2) and c(10-14). The alpha and beta chains form an alternating ring which encloses part of the gamma chain. F(1) is attached to F(0) by a central stalk formed by the gamma and epsilon chains, while a peripheral stalk is formed by the delta and b chains.

The protein localises to the cell inner membrane. F(1)F(0) ATP synthase produces ATP from ADP in the presence of a proton or sodium gradient. F-type ATPases consist of two structural domains, F(1) containing the extramembraneous catalytic core and F(0) containing the membrane proton channel, linked together by a central stalk and a peripheral stalk. During catalysis, ATP synthesis in the catalytic domain of F(1) is coupled via a rotary mechanism of the central stalk subunits to proton translocation. Its function is as follows. Component of the F(0) channel, it forms part of the peripheral stalk, linking F(1) to F(0). The chain is ATP synthase subunit b from Koribacter versatilis (strain Ellin345).